The following is a 474-amino-acid chain: PTS system N-acetylmuramic acid-specific EIIBC component (474 aa).

The PTS EIIB type-1 domain occupies 1–89 (MAKEISSELL…SELLGEAPVQ (89 aa)). At 1–123 (MAKEISSELL…LAKFATIFTP (123 aa)) the chain is on the cytoplasmic side. C29 serves as the catalytic Phosphocysteine intermediate; for EIIB activity. The 360-residue stretch at 115–474 (AKFATIFTPL…LFGCRNVNLD (360 aa)) folds into the PTS EIIC type-1 domain. Residues 124 to 144 (LIPGFIAAGLLLGIATLIATV) form a helical membrane-spanning segment. Over 145 to 157 (MHVPADAQGTLPD) the chain is Periplasmic. The helical transmembrane segment at 158-178 (ALNFMKVFSKGLFTFLVILVG) threads the bilayer. Residues 179–180 (YN) lie on the Cytoplasmic side of the membrane. Residues 181–201 (AAQAFGGTGVNGAIIAALFLL) form a helical membrane-spanning segment. Residues 202–217 (GYNPAATTGYYAGFHD) lie on the Periplasmic side of the membrane. Residues 218 to 238 (FFGLPIDPRGNIIGVLIAAWA) form a helical membrane-spanning segment. Residues 239 to 260 (CARIEGMVRRFMPDDLDMLLTS) are Cytoplasmic-facing. Residues 261–281 (LITLLITATLAYLIIMPLGGW) traverse the membrane as a helical segment. Topologically, residues 282–301 (LFEGMSWLFMHLNSNPLGCA) are periplasmic. The chain crosses the membrane as a helical span at residues 302 to 322 (VLAGLFLIAVVFGVHQGFIPV). Residues 323-334 (YLALMDSQGFNS) are Cytoplasmic-facing. The chain crosses the membrane as a helical span at residues 335–355 (LFPILSMAGAGQVGAALALYW). The Periplasmic portion of the chain corresponds to 356 to 368 (RAQPHSGLRSQVR). A helical transmembrane segment spans residues 369 to 389 (GAIIPGLLGVGEPLIYGVTLP). At 390–393 (RMKP) the chain is on the cytoplasmic side. The chain crosses the membrane as a helical span at residues 394-414 (FITACLGGAAGGLFIGLIAWW). The Periplasmic segment spans residues 415–440 (GLPMGLNSAFGPSGLVALPLMTSAQG). A helical membrane pass occupies residues 441 to 461 (ILPAMAIYAGGILVAWVCGFI). The Cytoplasmic portion of the chain corresponds to 462–474 (FTTLFGCRNVNLD).

The protein resides in the cell inner membrane. It catalyses the reaction N-acetyl-beta-D-muramate(out) + N(pros)-phospho-L-histidyl-[protein] = N-acetyl-beta-D-muramate 6-phosphate(in) + L-histidyl-[protein]. The phosphoenolpyruvate-dependent sugar phosphotransferase system (sugar PTS), a major carbohydrate active transport system, catalyzes the phosphorylation of incoming sugar substrates concomitantly with their translocation across the cell membrane. This system is involved in N-acetylmuramic acid (MurNAc) transport, yielding cytoplasmic MurNAc-6-P. Is also able to take up anhydro-N-acetylmuramic acid (anhMurNAc), but cannot phosphorylate the carbon 6, probably because of the 1,6-anhydro ring. In Shigella dysenteriae serotype 1 (strain Sd197), this protein is PTS system N-acetylmuramic acid-specific EIIBC component (murP).